We begin with the raw amino-acid sequence, 45 residues long: Photosystem I reaction center subunit IX 1 (45 aa).

A helical membrane pass occupies residues 9-29; sequence WFRSAPVVATIWITLTAGIIV.

It belongs to the PsaJ family.

It is found in the cellular thylakoid membrane. In terms of biological role, may help in the organization of the PsaE and PsaF subunits. The protein is Photosystem I reaction center subunit IX 1 of Prochlorococcus marinus (strain NATL1A).